A 230-amino-acid polypeptide reads, in one-letter code: Orotidine 5'-phosphate decarboxylase (230 aa).

Substrate-binding positions include D8, K32, 59–68, T118, R178, Q187, G207, and R208; that span reads DLKLYDIPNT. Residue K61 is the Proton donor of the active site.

This sequence belongs to the OMP decarboxylase family. Type 1 subfamily. In terms of assembly, homodimer.

It carries out the reaction orotidine 5'-phosphate + H(+) = UMP + CO2. It participates in pyrimidine metabolism; UMP biosynthesis via de novo pathway; UMP from orotate: step 2/2. Catalyzes the decarboxylation of orotidine 5'-monophosphate (OMP) to uridine 5'-monophosphate (UMP). In Nautilia profundicola (strain ATCC BAA-1463 / DSM 18972 / AmH), this protein is Orotidine 5'-phosphate decarboxylase.